The sequence spans 402 residues: UPF0597 protein THA_1286 (402 aa).

Belongs to the UPF0597 family.

This chain is UPF0597 protein THA_1286, found in Thermosipho africanus (strain TCF52B).